Here is a 327-residue protein sequence, read N- to C-terminus: Nuclear apoptosis-inducing factor 1 (327 aa).

Residues 1-70 (MAVPAKKRKM…CRRELPEVKK (70 aa)) are required for nuclear localization and apoptosis-inducing activity. The segment covering 87-98 (RAAVEGGEAPGP) has biased composition (low complexity). Disordered stretches follow at residues 87 to 118 (RAAV…GGGP) and 303 to 327 (NTAN…SIIQ). Over residues 104–118 (AGGPGTGGGSGGGGP) the composition is skewed to gly residues. Positions 316-327 (VAQNGQPDSIIQ) are enriched in polar residues.

The protein belongs to the NAIF1 family. As to quaternary structure, interacts with HARBI1. As to expression, widely expressed.

Its subcellular location is the nucleus. Functionally, induces apoptosis. The sequence is that of Nuclear apoptosis-inducing factor 1 (NAIF1) from Homo sapiens (Human).